A 630-amino-acid polypeptide reads, in one-letter code: Glutamyl-tRNA(Gln) amidotransferase subunit E (630 aa).

It belongs to the GatB/GatE family. GatE subfamily. Heterodimer of GatD and GatE.

The enzyme catalyses L-glutamyl-tRNA(Gln) + L-glutamine + ATP + H2O = L-glutaminyl-tRNA(Gln) + L-glutamate + ADP + phosphate + H(+). Allows the formation of correctly charged Gln-tRNA(Gln) through the transamidation of misacylated Glu-tRNA(Gln) in organisms which lack glutaminyl-tRNA synthetase. The reaction takes place in the presence of glutamine and ATP through an activated gamma-phospho-Glu-tRNA(Gln). The GatDE system is specific for glutamate and does not act on aspartate. This is Glutamyl-tRNA(Gln) amidotransferase subunit E from Methanocaldococcus jannaschii (strain ATCC 43067 / DSM 2661 / JAL-1 / JCM 10045 / NBRC 100440) (Methanococcus jannaschii).